Reading from the N-terminus, the 435-residue chain is ATP-dependent protease ATPase subunit HslU (435 aa).

Residues valine 18, 60–65 (GVGKTE), aspartate 248, glutamate 313, and arginine 385 each bind ATP.

It belongs to the ClpX chaperone family. HslU subfamily. In terms of assembly, a double ring-shaped homohexamer of HslV is capped on each side by a ring-shaped HslU homohexamer. The assembly of the HslU/HslV complex is dependent on binding of ATP.

Its subcellular location is the cytoplasm. ATPase subunit of a proteasome-like degradation complex; this subunit has chaperone activity. The binding of ATP and its subsequent hydrolysis by HslU are essential for unfolding of protein substrates subsequently hydrolyzed by HslV. HslU recognizes the N-terminal part of its protein substrates and unfolds these before they are guided to HslV for hydrolysis. The chain is ATP-dependent protease ATPase subunit HslU from Azorhizobium caulinodans (strain ATCC 43989 / DSM 5975 / JCM 20966 / LMG 6465 / NBRC 14845 / NCIMB 13405 / ORS 571).